Reading from the N-terminus, the 458-residue chain is uncharacterized protein (458 aa).

The protein belongs to the MG032/MG096/MG288 family.

This is an uncharacterized protein from Mycoplasma pneumoniae (strain ATCC 29342 / M129 / Subtype 1) (Mycoplasmoides pneumoniae).